Here is a 247-residue protein sequence, read N- to C-terminus: MATNGEEQQSQAGRHQEVGHKSLLQSDALYQYILETSVYPREPECMKELREVTAKHPWNIMTTSADEGQFLNMLLKLVNAKNTMEIGVYTGYSLLATALAIPEDGKILAMDINRENYELGLPVIQKAGVAHKIDFKEGPALPVLDQMIEDGKYHGSFDFIFVDADKDNYINYHKRLIELVKVGGLIGYDNTLWNGSVVAPPDAPMRKYVRYYRDFVLELNKALAADPRIEICMLPVGDGITLCRRIQ.

Lys-21 is a substrate binding site. S-adenosyl-L-methionine is bound by residues Thr-63, Glu-85, 87–88, Ser-93, Asp-111, and Ala-140; that span reads GV. Asp-163 contacts substrate. Asp-163 is a binding site for a divalent metal cation. Position 165 (Asp-165) interacts with S-adenosyl-L-methionine. Residues Asp-189 and Asn-190 each contribute to the a divalent metal cation site. Asn-194 lines the substrate pocket.

It belongs to the class I-like SAM-binding methyltransferase superfamily. Cation-dependent O-methyltransferase family. CCoAMT subfamily. It depends on a divalent metal cation as a cofactor.

The catalysed reaction is (E)-caffeoyl-CoA + S-adenosyl-L-methionine = (E)-feruloyl-CoA + S-adenosyl-L-homocysteine + H(+). Its pathway is aromatic compound metabolism; phenylpropanoid biosynthesis. Functionally, methylates caffeoyl-CoA to feruloyl-CoA and 5-hydroxyferuloyl-CoA to sinapoyl-CoA. Plays a role in the synthesis of feruloylated polysaccharides. Involved in the reinforcement of the plant cell wall. Also involved in the responding to wounding or pathogen challenge by the increased formation of cell wall-bound ferulic acid polymers. This is Caffeoyl-CoA O-methyltransferase from Populus tremuloides (Quaking aspen).